The following is a 294-amino-acid chain: 4-hydroxy-tetrahydrodipicolinate synthase (294 aa).

Thr-47 contacts pyruvate. Tyr-135 functions as the Proton donor/acceptor in the catalytic mechanism. Lys-163 serves as the catalytic Schiff-base intermediate with substrate. Thr-205 contributes to the pyruvate binding site.

The protein belongs to the DapA family. Homotetramer; dimer of dimers.

It localises to the cytoplasm. The catalysed reaction is L-aspartate 4-semialdehyde + pyruvate = (2S,4S)-4-hydroxy-2,3,4,5-tetrahydrodipicolinate + H2O + H(+). It functions in the pathway amino-acid biosynthesis; L-lysine biosynthesis via DAP pathway; (S)-tetrahydrodipicolinate from L-aspartate: step 3/4. Functionally, catalyzes the condensation of (S)-aspartate-beta-semialdehyde [(S)-ASA] and pyruvate to 4-hydroxy-tetrahydrodipicolinate (HTPA). In Rickettsia montanensis, this protein is 4-hydroxy-tetrahydrodipicolinate synthase.